The following is a 146-amino-acid chain: VEWTQQERSIIAGFIANLNYEDIGPKALARCLIVYPWTQRYFGAYGDLSTPDAIKGNAKIAAHGVKVLHGLDRAVKNMDNINEAYSELSVLHSDKLHVDPDNFRILGDCLTVVIAANLGDAFTVETQCAFQKFLAVVVFALGRKYH.

The region spanning 2–146 is the Globin domain; it reads EWTQQERSII…VVFALGRKYH (145 aa). Residues His-63 and His-92 each contribute to the heme b site.

This sequence belongs to the globin family. As to quaternary structure, heterotetramer of two alpha chains and two beta chains. Red blood cells.

In terms of biological role, involved in oxygen transport from gills to the various peripheral tissues. The protein is Hemoglobin subunit beta (hbb) of Thunnus thynnus (Atlantic bluefin tuna).